A 307-amino-acid chain; its full sequence is Pseudouridine-5'-phosphate glycosidase (307 aa).

Glutamate 26 functions as the Proton donor in the catalytic mechanism. Positions 88 and 108 each coordinate substrate. Aspartate 140 lines the Mn(2+) pocket. Substrate is bound at residue 142–144; the sequence is SAD. Lysine 161 (nucleophile) is an active-site residue.

This sequence belongs to the pseudouridine-5'-phosphate glycosidase family. Homotrimer. The cofactor is Mn(2+).

It catalyses the reaction D-ribose 5-phosphate + uracil = psi-UMP + H2O. In terms of biological role, catalyzes the reversible cleavage of pseudouridine 5'-phosphate (PsiMP) to ribose 5-phosphate and uracil. Functions biologically in the cleavage direction, as part of a pseudouridine degradation pathway. The protein is Pseudouridine-5'-phosphate glycosidase of Clostridium botulinum (strain Langeland / NCTC 10281 / Type F).